Here is a 66-residue protein sequence, read N- to C-terminus: Conotoxin Lt5.6 (66 aa).

The signal sequence occupies residues 1 to 19 (MLCLPVFIILLLLASPAAP). The propeptide occupies 20–54 (KSLETRIQNDLIRAGLTDADLKTEKGFLSGLLNVA).

The protein belongs to the conotoxin T superfamily. In terms of processing, contains 2 disulfide bonds that can be either 'C1-C3, C2-C4' or 'C1-C4, C2-C3', since these disulfide connectivities have been observed for conotoxins with cysteine framework V (for examples, see AC P0DQQ7 and AC P81755). In terms of tissue distribution, expressed by the venom duct.

It is found in the secreted. The sequence is that of Conotoxin Lt5.6 from Conus litteratus (Lettered cone).